Here is a 384-residue protein sequence, read N- to C-terminus: Troponin T (384 aa).

A compositionally biased stretch (acidic residues) spans 1-15 (MSDEEEYSEEEEEVP). Disordered stretches follow at residues 1-23 (MSDE…PRHS), 61-169 (RAKE…KEQL), 237-257 (LRHK…KYPP), and 313-384 (PKWF…EEEE). Composition is skewed to basic and acidic residues over residues 61 to 74 (RAKE…LKDK) and 81 to 126 (MRAD…EKKR). The segment covering 316–327 (FGERPGKKKGDP) has biased composition (basic and acidic residues). Residues 328–384 (ESPEEEEVKADAGVDDELEEPTFEPEPEPEPEEEAAEEEAEEEEEEEEEEEEEEEEE) show a composition bias toward acidic residues.

This sequence belongs to the troponin T family.

Troponin T is the tropomyosin-binding subunit of troponin, the thin filament regulatory complex which confers calcium-sensitivity to striated muscle actomyosin ATPase activity. This chain is Troponin T (TNT), found in Periplaneta americana (American cockroach).